Here is a 535-residue protein sequence, read N- to C-terminus: CTP synthase (535 aa).

Positions 1 to 268 are amidoligase domain; the sequence is MKTKYIFVTG…DSLVCKKLEL (268 aa). Position 14 (S14) interacts with CTP. S14 is a binding site for UTP. An ATP-binding site is contributed by 15 to 20; that stretch reads SLGKGI. Y55 is an L-glutamine binding site. D72 provides a ligand contact to ATP. The Mg(2+) site is built by D72 and E142. CTP is bound by residues 149–151, 189–194, and K225; these read DIE and KTKPTQ. Residues 189–194 and K225 contribute to the UTP site; that span reads KTKPTQ. A Glutamine amidotransferase type-1 domain is found at 293–535; it reads TIGLVGKYVE…IKVACTVKEK (243 aa). Residue G355 coordinates L-glutamine. Residue C382 is the Nucleophile; for glutamine hydrolysis of the active site. Residues 383–386, E406, and R463 contribute to the L-glutamine site; that span reads LGMQ. Residues H508 and E510 contribute to the active site.

This sequence belongs to the CTP synthase family. In terms of assembly, homotetramer.

It carries out the reaction UTP + L-glutamine + ATP + H2O = CTP + L-glutamate + ADP + phosphate + 2 H(+). It catalyses the reaction L-glutamine + H2O = L-glutamate + NH4(+). The catalysed reaction is UTP + NH4(+) + ATP = CTP + ADP + phosphate + 2 H(+). The protein operates within pyrimidine metabolism; CTP biosynthesis via de novo pathway; CTP from UDP: step 2/2. Allosterically activated by GTP, when glutamine is the substrate; GTP has no effect on the reaction when ammonia is the substrate. The allosteric effector GTP functions by stabilizing the protein conformation that binds the tetrahedral intermediate(s) formed during glutamine hydrolysis. Inhibited by the product CTP, via allosteric rather than competitive inhibition. Catalyzes the ATP-dependent amination of UTP to CTP with either L-glutamine or ammonia as the source of nitrogen. Regulates intracellular CTP levels through interactions with the four ribonucleotide triphosphates. This is CTP synthase from Clostridium acetobutylicum (strain ATCC 824 / DSM 792 / JCM 1419 / IAM 19013 / LMG 5710 / NBRC 13948 / NRRL B-527 / VKM B-1787 / 2291 / W).